The following is a 345-amino-acid chain: Uroporphyrinogen decarboxylase (345 aa).

Residues 24 to 28 (RQAGR), Asp-74, Tyr-150, Ser-205, and His-318 contribute to the substrate site.

The protein belongs to the uroporphyrinogen decarboxylase family. Homodimer.

The protein localises to the cytoplasm. The catalysed reaction is uroporphyrinogen III + 4 H(+) = coproporphyrinogen III + 4 CO2. Its pathway is porphyrin-containing compound metabolism; protoporphyrin-IX biosynthesis; coproporphyrinogen-III from 5-aminolevulinate: step 4/4. In terms of biological role, catalyzes the decarboxylation of four acetate groups of uroporphyrinogen-III to yield coproporphyrinogen-III. This is Uroporphyrinogen decarboxylase from Dichelobacter nodosus (strain VCS1703A).